Reading from the N-terminus, the 429-residue chain is MSRSEILFANAQKHIPGGVNSPVRAFRSVGGTPLFFKHAEGAYVVDEDDKRYVDYVGSWGPMILGHSHPDVLDSVRRQLQHGLSYGAPTALETEMAELVCSLVPSMEMVRMVSSGTEATMSAIRLARGYTGRDSIIKFEGCYHGHSDSLLVKAGSGALTQGVPNSAGVPAAFAKHTLTLPFNDIDAVAECLAQVGKEVACIIVEPVAGNMNCVPPAPGFLEGLREQCDKHGVVLIFDEVMTGFRVALGGAQAHYGVTPDLTTFGKIIGGGMPVGCFGGKRAIMECIAPLGPVYQAGTLSGNPLAMAAGLTTLKLISRPGFHTELSDYTTRMLDGLQQRADAAGIPFVTTQAGAMFGLYFSGADDIVTFADVMASDSARFNRFFHLMLEGGVYLAPSAFEAGFTSIAHGDKELEITFAAAERAFAELKKA.

Lys-265 carries the post-translational modification N6-(pyridoxal phosphate)lysine.

The protein belongs to the class-III pyridoxal-phosphate-dependent aminotransferase family. HemL subfamily. As to quaternary structure, homodimer. The cofactor is pyridoxal 5'-phosphate.

The protein localises to the cytoplasm. The catalysed reaction is (S)-4-amino-5-oxopentanoate = 5-aminolevulinate. Its pathway is porphyrin-containing compound metabolism; protoporphyrin-IX biosynthesis; 5-aminolevulinate from L-glutamyl-tRNA(Glu): step 2/2. The sequence is that of Glutamate-1-semialdehyde 2,1-aminomutase from Ectopseudomonas mendocina (strain ymp) (Pseudomonas mendocina).